The chain runs to 448 residues: N-succinylarginine dihydrolase (448 aa).

Substrate contacts are provided by residues 19–28, Asn110, and 137–138; these read GGLSYGNVAS and HR. Glu174 is a catalytic residue. Arg214 provides a ligand contact to substrate. His250 is an active-site residue. 2 residues coordinate substrate: Asp252 and Asn365. The active-site Nucleophile is the Cys371.

Belongs to the succinylarginine dihydrolase family. In terms of assembly, homodimer.

It catalyses the reaction N(2)-succinyl-L-arginine + 2 H2O + 2 H(+) = N(2)-succinyl-L-ornithine + 2 NH4(+) + CO2. Its pathway is amino-acid degradation; L-arginine degradation via AST pathway; L-glutamate and succinate from L-arginine: step 2/5. Its function is as follows. Catalyzes the hydrolysis of N(2)-succinylarginine into N(2)-succinylornithine, ammonia and CO(2). The protein is N-succinylarginine dihydrolase of Pseudomonas fluorescens (strain SBW25).